Consider the following 32-residue polypeptide: Jingzhaotoxin F4-32.60 (32 aa).

Cystine bridges form between C2/C17, C9/C22, and C16/C29. D31 is subject to Aspartic acid 1-amide.

It belongs to the neurotoxin 10 (Hwtx-1) family. 30 (Jztx-14) subfamily. Post-translationally, amidated as well as non-amidated forms are found in the venom. As to expression, expressed by the venom gland.

It is found in the secreted. Probable ion channel inhibitor. In Chilobrachys guangxiensis (Chinese earth tiger tarantula), this protein is Jingzhaotoxin F4-32.60.